We begin with the raw amino-acid sequence, 81 residues long: uncharacterized protein (81 aa).

Residues 1–20 (MIDDHEALLLLVLSSGPAAL) form the signal peptide.

This is an uncharacterized protein from Treponema pallidum (strain Nichols).